The sequence spans 106 residues: Toxin-like structure LSTX-D5 (106 aa).

A signal peptide spans 1-20; sequence MMKVLVVVALLVTLISYSSS. The propeptide occupies 21–41; that stretch reads EGIDDLETDELLSLMANEQTR. 4 disulfides stabilise this stretch: C45–C60, C52–C69, C59–C85, and C71–C83.

Belongs to the neurotoxin 19 (CSTX) family. 02 (D7) subfamily. As to expression, expressed by the venom gland.

It localises to the secreted. This is Toxin-like structure LSTX-D5 from Lycosa singoriensis (Wolf spider).